Reading from the N-terminus, the 261-residue chain is Ribosomal RNA small subunit methyltransferase J (261 aa).

S-adenosyl-L-methionine-binding positions include 101 to 102 (RD), 117 to 118 (ER), 153 to 154 (SS), and Asp-176.

It belongs to the methyltransferase superfamily. RsmJ family.

It localises to the cytoplasm. The catalysed reaction is guanosine(1516) in 16S rRNA + S-adenosyl-L-methionine = N(2)-methylguanosine(1516) in 16S rRNA + S-adenosyl-L-homocysteine + H(+). Specifically methylates the guanosine in position 1516 of 16S rRNA. The sequence is that of Ribosomal RNA small subunit methyltransferase J from Vibrio cholerae serotype O1 (strain ATCC 39315 / El Tor Inaba N16961).